Reading from the N-terminus, the 89-residue chain is MFGLGGQPQLSSQQKLSAAEAELDLVTDMFNKLVDNCHKKCIEQIYNDGQLNKNESTCIDRCVAKYFETNVKVGENMQQLGQAFSPGKF.

Residues 37–62 (CHKKCIEQIYNDGQLNKNESTCIDRC) carry the Twin CX3C motif motif. Intrachain disulfides connect Cys-37–Cys-62 and Cys-41–Cys-58.

It belongs to the small Tim family. In terms of assembly, heterohexamer; composed of 3 copies of TIM9 and 3 copies of TIM10, named soluble 70 kDa complex. Associates directly with the TIM22 complex, whose core is composed of TIM22 and TIM54. Interacts with the transmembrane regions of multi-pass transmembrane proteins in transit.

The protein resides in the mitochondrion inner membrane. Mitochondrial intermembrane chaperone that participates in the import and insertion of multi-pass transmembrane proteins into the mitochondrial inner membrane. Also required for the transfer of beta-barrel precursors from the TOM complex to the sorting and assembly machinery (SAM complex) of the outer membrane. Acts as a chaperone-like protein that protects the hydrophobic precursors from aggregation and guide them through the mitochondrial intermembrane space. This chain is Mitochondrial import inner membrane translocase subunit TIM10 (TIM10), found in Kluyveromyces lactis (strain ATCC 8585 / CBS 2359 / DSM 70799 / NBRC 1267 / NRRL Y-1140 / WM37) (Yeast).